We begin with the raw amino-acid sequence, 402 residues long: Myb-related protein 1 (402 aa).

Residues 42–102 form the HTH myb-type domain; it reads TDAKPRLKWT…HLQKYRLSKN (61 aa). The segment at residues 73–98 is a DNA-binding region (H-T-H motif); it reads PKTIMKVMGIPGLTLYHLKSHLQKYR. Residues 148–168 adopt a coiled-coil conformation; sequence SDALQMQIEVQRRLHEQLEVQ. Positions 161 to 166 match the LHEQLE motif; the sequence is LHEQLE. Polar residues predominate over residues 238 to 260; the sequence is QQMQKTYPPNSSLDSCLTSSEGT. Disordered stretches follow at residues 238–266, 344–363, and 382–402; these read QQMQ…APKM, EHRG…FNEN, and HDEN…FSWN.

It belongs to the MYB-CC family. As to quaternary structure, isoforms 1 and 2: homodimer. Isoform 3: loss of dimerization. As to expression, expressed in phloem and/or cambium.

It is found in the nucleus. Functionally, transcription factor that may act on the GAL1 promoter. Acts redundantly with MYR2 as a repressor of flowering and organ elongation under decreased light intensity. Represses gibberellic acid (GA)-dependent responses and affects levels of bioactive GA. The protein is Myb-related protein 1 of Arabidopsis thaliana (Mouse-ear cress).